The following is a 148-amino-acid chain: Large ribosomal subunit protein bL9 (148 aa).

Belongs to the bacterial ribosomal protein bL9 family.

Functionally, binds to the 23S rRNA. The polypeptide is Large ribosomal subunit protein bL9 (Thermus thermophilus (strain ATCC BAA-163 / DSM 7039 / HB27)).